The sequence spans 457 residues: Multidrug resistance protein MdtK (457 aa).

Transmembrane regions (helical) follow at residues 11–31, 53–73, 93–113, 127–147, 160–180, 189–209, 243–263, 276–296, 314–334, 357–377, 387–407, and 418–438; these read LLALAIPVIIAQVAQTSMGFV, IWLPAILFGHGLLLALTPVIA, WLAGFVSILIMVVLWNAGYII, AVGYLRALLWGAPGYLFFQVA, GMVMGFIGLLVNIPVNYIFIY, GGVGCGVATAAVYWVMFFSMI, LPIALALFFEVTLFAVVALLV, IALNFSSLMFVLPMSLAAAVT, AARTGLGVGVCMAFCTALFTV, LMLLAAIYQLSDSIQVIGSGI, IFFITFTAYWVLGLPTGYILA, and PAGFWMGFIIGLTSAAILMML.

Belongs to the multi antimicrobial extrusion (MATE) (TC 2.A.66.1) family. MdtK subfamily.

Its subcellular location is the cell inner membrane. In terms of biological role, multidrug efflux pump that functions probably as a Na(+)/drug antiporter. This chain is Multidrug resistance protein MdtK, found in Enterobacter sp. (strain 638).